The chain runs to 346 residues: MKTGRGVGPTDAAGGPARHLPVMLAEVLAHLAPKDAGTCLDGTFGAGGYTRAILEAANGRVIAIDRDPTAIAGGQALVEETGGRLTLVHERFSHLDQVAQDLGAAPLDGVVLDIGVSSMQLDEADRGFSFRRDGPLDMRMANDGPSAADLVADLDEVELAHVIWTLGEERFSRQIARAIVNARAESPITRTTQLADIVSKVVWAKPGEMHPATRTFQALRIAVNEELQELVGALAAAERVLKPGGRLVVVTFHSLEDRIVKNFLSHRSKAPSASRHMPQAEGPAPSFRLVAKGAVEPGSDEVAGNPRARSAKLRAAERTDAPAHPDGDLAGLLPADLSQRRGRRRS.

Residues Gly-47–Tyr-49, Asp-65, Phe-92, Asp-113, and Gln-120 each bind S-adenosyl-L-methionine. A disordered region spans residues Ala-294–Ser-346. Over residues Arg-314–Gly-327 the composition is skewed to basic and acidic residues. Residues Asp-328–Leu-337 are compositionally biased toward low complexity.

It belongs to the methyltransferase superfamily. RsmH family.

Its subcellular location is the cytoplasm. It carries out the reaction cytidine(1402) in 16S rRNA + S-adenosyl-L-methionine = N(4)-methylcytidine(1402) in 16S rRNA + S-adenosyl-L-homocysteine + H(+). Its function is as follows. Specifically methylates the N4 position of cytidine in position 1402 (C1402) of 16S rRNA. This chain is Ribosomal RNA small subunit methyltransferase H, found in Azorhizobium caulinodans (strain ATCC 43989 / DSM 5975 / JCM 20966 / LMG 6465 / NBRC 14845 / NCIMB 13405 / ORS 571).